Consider the following 123-residue polypeptide: Thioredoxin H-type 1 (123 aa).

Position 2 is an N-acetylalanine (alanine 2). Residues 2 to 119 (AATAEVIPAG…IEAKLLKHSQ (118 aa)) enclose the Thioredoxin domain. A disulfide bond links cysteine 45 and cysteine 48.

Belongs to the thioredoxin family. Plant H-type subfamily.

It is found in the cytoplasm. Its function is as follows. Participates in various redox reactions through the reversible oxidation of the active center dithiol to a disulfide. The H form is known to activate a number of cytosolic enzymes. The chain is Thioredoxin H-type 1 (THL-1) from Brassica napus (Rape).